Here is a 408-residue protein sequence, read N- to C-terminus: GTPase Obg (408 aa).

The 159-residue stretch at 1–159 folds into the Obg domain; it reads MKFVDEVSIR…RDLKMEMKVL (159 aa). The interval 127–150 is disordered; that stretch reads NTRFKSSTNRAPRQTTPGKPGDQR. Polar residues predominate over residues 129–143; that stretch reads RFKSSTNRAPRQTTP. An OBG-type G domain is found at 160-333; the sequence is ADVGLLGLPN…LSHDLMRYLE (174 aa). Residues 166 to 173, 191 to 195, 213 to 216, 283 to 286, and 314 to 316 contribute to the GTP site; these read GLPNAGKS, FTTLV, DIPG, NKSD, and SAI. Mg(2+) contacts are provided by serine 173 and threonine 193. Residues 382–408 form a disordered region; that stretch reads HDIGDDDGWDDDFEDDEDGPEIIYVRD. Residues 385–401 are compositionally biased toward acidic residues; it reads GDDDGWDDDFEDDEDGP.

The protein belongs to the TRAFAC class OBG-HflX-like GTPase superfamily. OBG GTPase family. In terms of assembly, monomer. Mg(2+) serves as cofactor.

Its subcellular location is the cytoplasm. Its function is as follows. An essential GTPase which binds GTP, GDP and possibly (p)ppGpp with moderate affinity, with high nucleotide exchange rates and a fairly low GTP hydrolysis rate. Plays a role in control of the cell cycle, stress response, ribosome biogenesis and in those bacteria that undergo differentiation, in morphogenesis control. This chain is GTPase Obg, found in Pseudomonas putida (strain GB-1).